A 380-amino-acid chain; its full sequence is Putative ankyrin repeat protein RF_1306 (380 aa).

ANK repeat units follow at residues Asn48–Ala76, Lys80–Pro109, Tyr112–Lys143, Asn170–Ile199, Leu203–Thr233, Leu239–Lys268, Leu270–Tyr299, Leu303–Tyr333, and Ser337–Tyr366.

In Rickettsia felis (strain ATCC VR-1525 / URRWXCal2) (Rickettsia azadi), this protein is Putative ankyrin repeat protein RF_1306.